Consider the following 143-residue polypeptide: Ribosome maturation factor RimP (143 aa).

This sequence belongs to the RimP family.

The protein localises to the cytoplasm. Functionally, required for maturation of 30S ribosomal subunits. The polypeptide is Ribosome maturation factor RimP (Nitrosomonas eutropha (strain DSM 101675 / C91 / Nm57)).